Reading from the N-terminus, the 625-residue chain is Tumor necrosis factor receptor superfamily member 11A (625 aa).

Residues 1–30 (MAPRARRRRQLPAPLLALCVLLVPLQVTLQ) form the signal peptide. Topologically, residues 31 to 214 (VTPPCTQERH…PKEAQAYLPS (184 aa)) are extracellular. 9 cysteine pairs are disulfide-bonded: cysteine 35-cysteine 47, cysteine 48-cysteine 61, cysteine 51-cysteine 69, cysteine 72-cysteine 87, cysteine 93-cysteine 113, cysteine 115-cysteine 128, cysteine 125-cysteine 127, cysteine 134-cysteine 152, and cysteine 155-cysteine 170. TNFR-Cys repeat units lie at residues 35-69 (CTQE…DSVC), 72-113 (CGPD…PRRC), 115-152 (CTAG…DTVC), and 155-195 (CLLG…DVVC). Asparagine 106 carries an N-linked (GlcNAc...) asparagine glycan. 5 residues coordinate Na(+): cysteine 134, alanine 135, phenylalanine 138, serine 161, and valine 163. A glycan (N-linked (GlcNAc...) asparagine) is linked at asparagine 175. Cysteine 176 and cysteine 195 are joined by a disulfide. Residues 215–234 (LIVLLLFISVVVVAAIIFGV) traverse the membrane as a helical segment. The Cytoplasmic portion of the chain corresponds to 235–625 (YYRKGGKALT…HTQGSGQCAE (391 aa)). Disordered regions lie at residues 331–356 (TQGD…STGS), 388–413 (GTES…MPVS), and 479–524 (SMAE…FISS). Residues 499–511 (SGSSPSDQPPASG) are compositionally biased toward low complexity. The segment covering 512 to 524 (NVTGNSNSTFISS) has biased composition (polar residues). A required for interaction with EEIG1 and osteoclast differentiation region spans residues 532-537 (GDIIVV). Residues 542 to 625 (TSQEGPGSAE…HTQGSGQCAE (84 aa)) are disordered. The segment covering 543–558 (SQEGPGSAEPESEPVG) has biased composition (low complexity). Positions 561-571 (VQEETLAHRDS) are enriched in basic and acidic residues. Residue serine 571 is modified to Phosphoserine. Residues 603-625 (RPVQEQGGAQTSLHTQGSGQCAE) show a composition bias toward polar residues.

In terms of assembly, binds to the clefts between the subunits of the TNFSF11 ligand trimer to form a heterohexamer. Part of a complex composed of EEIG1, TNFRSF11A/RANK, PLCG2, GAB2, TEC and BTK; complex formation increases in the presence of TNFSF11/RANKL. Interacts with TRAF1, TRAF2, TRAF3, TRAF5 and TRAF6. Interacts (via cytoplasmic domain) with GAB2. Interacts (via cytoplasmic domain); with EEIG1 (via N-terminus); when in the presence of TNFSF11/RANKL. In terms of tissue distribution, ubiquitous expression with high levels in trabecular bone, thymus, small intestine, lung, brain and kidney. Weakly expressed in spleen and bone marrow.

The protein resides in the cell membrane. It is found in the membrane raft. Functionally, receptor for TNFSF11/RANKL/TRANCE/OPGL; essential for RANKL-mediated osteoclastogenesis. Its interaction with EEIG1 promotes osteoclastogenesis via facilitating the transcription of NFATC1 and activation of PLCG2. Involved in the regulation of interactions between T-cells and dendritic cells. This is Tumor necrosis factor receptor superfamily member 11A (Tnfrsf11a) from Mus musculus (Mouse).